The chain runs to 677 residues: NADPH--cytochrome P450 reductase (677 aa).

Gly-2 is subject to N-acetylglycine. Residues 2-21 (GDSHVDTSSTVSEAVAEEVS) lie on the Lumenal side of the membrane. A helical membrane pass occupies residues 22-42 (LFSMTDMILFSLIVGLLTYWF). Residues 43 to 677 (LFRKKKEEVP…KGRYSLDVWS (635 aa)) are Cytoplasmic-facing. Residue Ser-63 is modified to Phosphoserine. Positions 80–224 (IIVFYGSQTG…DFITWREQFW (145 aa)) constitute a Flavodoxin-like domain. Residues 86-91 (SQTGTA), 138-141 (ATYG), 173-182 (LGNKTYEHFN), and Asp-208 each bind FMN. The 243-residue stretch at 279-521 (KNPFLAAVTT…FVRKSQFRLP (243 aa)) folds into the FAD-binding FR-type domain. Position 298 (Arg-298) interacts with NADP(+). FAD contacts are provided by residues Arg-424, 454–457 (RYYS), 472–474 (CAV), Tyr-478, and 488–491 (GVAT). NADP(+) contacts are provided by residues Thr-535, 596 to 597 (SR), 602 to 606 (KVYVQ), and Asp-638. Trp-676 provides a ligand contact to FAD.

Belongs to the NADPH--cytochrome P450 reductase family. It in the N-terminal section; belongs to the flavodoxin family. This sequence in the C-terminal section; belongs to the flavoprotein pyridine nucleotide cytochrome reductase family. It depends on FAD as a cofactor. FMN serves as cofactor.

It is found in the endoplasmic reticulum membrane. It catalyses the reaction 2 oxidized [cytochrome P450] + NADPH = 2 reduced [cytochrome P450] + NADP(+) + H(+). Functionally, this enzyme is required for electron transfer from NADP to cytochrome P450 in microsomes. It can also provide electron transfer to heme oxygenase and cytochrome B5. The sequence is that of NADPH--cytochrome P450 reductase from Homo sapiens (Human).